A 131-amino-acid chain; its full sequence is D-ribose pyranase (131 aa).

Catalysis depends on H20, which acts as the Proton donor. Substrate contacts are provided by residues D28, H98, and 120–122; that span reads FSN.

This sequence belongs to the RbsD / FucU family. RbsD subfamily. In terms of assembly, homodecamer.

The protein localises to the cytoplasm. It carries out the reaction beta-D-ribopyranose = beta-D-ribofuranose. It participates in carbohydrate metabolism; D-ribose degradation; D-ribose 5-phosphate from beta-D-ribopyranose: step 1/2. Functionally, catalyzes the interconversion of beta-pyran and beta-furan forms of D-ribose. The protein is D-ribose pyranase of Oenococcus oeni (strain ATCC BAA-331 / PSU-1).